Reading from the N-terminus, the 437-residue chain is tRNA-2-methylthio-N(6)-dimethylallyladenosine synthase (437 aa).

Residues 3–120 (RKLFIETHGC…LPEMIDAART (118 aa)) enclose the MTTase N-terminal domain. Residues Cys-12, Cys-49, Cys-83, Cys-157, Cys-161, and Cys-164 each coordinate [4Fe-4S] cluster. The region spanning 143-370 (RVDGPSAYVS…QQRINQQGFE (228 aa)) is the Radical SAM core domain. Residues 373-437 (RRMVGTTQRI…PHSLRGSLLS (65 aa)) form the TRAM domain.

It belongs to the methylthiotransferase family. MiaB subfamily. As to quaternary structure, monomer. [4Fe-4S] cluster is required as a cofactor.

The protein localises to the cytoplasm. It catalyses the reaction N(6)-dimethylallyladenosine(37) in tRNA + (sulfur carrier)-SH + AH2 + 2 S-adenosyl-L-methionine = 2-methylsulfanyl-N(6)-dimethylallyladenosine(37) in tRNA + (sulfur carrier)-H + 5'-deoxyadenosine + L-methionine + A + S-adenosyl-L-homocysteine + 2 H(+). Catalyzes the methylthiolation of N6-(dimethylallyl)adenosine (i(6)A), leading to the formation of 2-methylthio-N6-(dimethylallyl)adenosine (ms(2)i(6)A) at position 37 in tRNAs that read codons beginning with uridine. This Stutzerimonas stutzeri (strain A1501) (Pseudomonas stutzeri) protein is tRNA-2-methylthio-N(6)-dimethylallyladenosine synthase.